Consider the following 393-residue polypeptide: NAD(P)H-quinone oxidoreductase subunit H, chloroplastic (393 aa).

It belongs to the complex I 49 kDa subunit family. In terms of assembly, NDH is composed of at least 16 different subunits, 5 of which are encoded in the nucleus.

It localises to the plastid. Its subcellular location is the chloroplast thylakoid membrane. It catalyses the reaction a plastoquinone + NADH + (n+1) H(+)(in) = a plastoquinol + NAD(+) + n H(+)(out). The catalysed reaction is a plastoquinone + NADPH + (n+1) H(+)(in) = a plastoquinol + NADP(+) + n H(+)(out). NDH shuttles electrons from NAD(P)H:plastoquinone, via FMN and iron-sulfur (Fe-S) centers, to quinones in the photosynthetic chain and possibly in a chloroplast respiratory chain. The immediate electron acceptor for the enzyme in this species is believed to be plastoquinone. Couples the redox reaction to proton translocation, and thus conserves the redox energy in a proton gradient. This chain is NAD(P)H-quinone oxidoreductase subunit H, chloroplastic, found in Nuphar advena (Common spatterdock).